A 329-amino-acid chain; its full sequence is Putative GTPase Obg (329 aa).

An Obg domain is found at 1–159; sequence MQFIDQARIM…WPLQLELKLL (159 aa). One can recognise an OBG-type G domain in the interval 160–328; that stretch reads AEVGIIGLPN…LKTQIWQQLG (169 aa). Residues 166–173, 191–195, 213–216, 280–283, and 309–311 each bind GTP; these read GLPNAGKS, FTTLI, DIPG, SKIE, and SSA. Mg(2+) contacts are provided by S173 and T193.

The protein belongs to the TRAFAC class OBG-HflX-like GTPase superfamily. OBG GTPase family. Monomer. Mg(2+) serves as cofactor.

Its subcellular location is the plastid. The protein resides in the organellar chromatophore. Functionally, an essential GTPase which binds GTP, GDP and possibly (p)ppGpp with moderate affinity, with high nucleotide exchange rates and a fairly low GTP hydrolysis rate. In Paulinella chromatophora, this protein is Putative GTPase Obg.